The sequence spans 128 residues: MEIGKKYELNPHRIKSFIDISSSNANMVGIIQENGGWFEVKSISSLDGFDYVTEIICANGEIYNDDGMGDDYFELSEEEFYCFREYKEPTSEEDEVKDKVSGVTKIHCIVDENNVDEIIELLRKTFKK.

This is an uncharacterized protein from Escherichia coli (Bacteriophage T6).